A 264-amino-acid chain; its full sequence is Phosphatidylglycerol--prolipoprotein diacylglyceryl transferase (264 aa).

The next 7 membrane-spanning stretches (helical) occupy residues 14-34 (IIFSIGPIALRWYGLMYLIGF), 60-80 (LIYTCFWGVILGGRIGDVFFY), 98-118 (GGMSFHGGLIGVIVAMIWVSF), 128-148 (ADFIAPLIPFGLGMGRIGNFI), 176-196 (SQLYEFFLEGVVLFFILNWFI), 203-223 (GSVAGLFLIGYGVFRFLVEYV), and 240-260 (GQLLSLPMIIGGLAIMIWAYS). Arginine 143 is an a 1,2-diacyl-sn-glycero-3-phospho-(1'-sn-glycerol) binding site.

Belongs to the Lgt family.

Its subcellular location is the cell inner membrane. The catalysed reaction is L-cysteinyl-[prolipoprotein] + a 1,2-diacyl-sn-glycero-3-phospho-(1'-sn-glycerol) = an S-1,2-diacyl-sn-glyceryl-L-cysteinyl-[prolipoprotein] + sn-glycerol 1-phosphate + H(+). The protein operates within protein modification; lipoprotein biosynthesis (diacylglyceryl transfer). In terms of biological role, catalyzes the transfer of the diacylglyceryl group from phosphatidylglycerol to the sulfhydryl group of the N-terminal cysteine of a prolipoprotein, the first step in the formation of mature lipoproteins. The sequence is that of Phosphatidylglycerol--prolipoprotein diacylglyceryl transferase from Actinobacillus pleuropneumoniae serotype 7 (strain AP76).